A 1002-amino-acid chain; its full sequence is Solute carrier family 12 member 3 (1002 aa).

Residues 1-135 (MAELPVTELP…KSPGEPVRFG (135 aa)) lie on the Cytoplasmic side of the membrane. Position 41 is a phosphoserine (S41). A Phosphothreonine modification is found at T44. The residue at position 47 (S47) is a Phosphoserine. A phosphothreonine mark is found at T48, T53, and T58. Phosphoserine occurs at positions 71 and 89. T122 carries the post-translational modification Phosphothreonine. S124 carries the phosphoserine modification. Residues 136–165 (WVKGVMIRCMLNIWGVILYLRLPWITAQAG) form a discontinuously helical membrane-spanning segment. Positions 146 and 149 each coordinate Na(+). Residues 166-187 (IVLTWLIILLSVMVTSITGLSI) traverse the membrane as a helical segment. Topologically, residues 188–218 (SAISTNGKVKSGGTYFLISRSLGPELGGSIG) are cytoplasmic. A helical membrane pass occupies residues 219–241 (LIFAFANAVGVAMHTVGFAETVR). Residues 242–253 (DLLQEYGTPIVD) lie on the Extracellular side of the membrane. The next 2 helical transmembrane spans lie at 254-278 (PIND…AGME) and 279-301 (WESK…YLVG). Topologically, residues 302-336 (TLIPASEDKASKGFYSYHGDIFVQNLVPDWRGIDG) are extracellular. Residues 337–358 (SFFGMFSIFFPSATGILAGANI) traverse the membrane as a discontinuously helical segment. 3 residues coordinate chloride: G351, I352, and L353. Over 359–369 (SGDLKDPAVAI) the chain is Cytoplasmic. Residues 370–391 (PKGTLMAIFWTTISYLAISATI) traverse the membrane as a helical segment. The Extracellular portion of the chain corresponds to 392–451 (GSCVVRDASGDVNDTMTPGPGPCEGLACGYGWNFTECSQQRSCRYGLINYYQTMSMVSAF). N-linked (GlcNAc...) asparagine glycosylation is present at N404. Cysteines 414 and 419 form a disulfide. The N-linked (GlcNAc...) asparagine glycan is linked to N424. Cysteines 428 and 434 form a disulfide. The chain crosses the membrane as a helical span at residues 452–475 (APLITAGIFGATLSSALACLVSAA). Na(+) contacts are provided by A462, S465, and S466. At 476–505 (KVFQCLCEDQLYPLIGFFGKGYGKNREPVR) the chain is on the cytoplasmic side. The chain crosses the membrane as a helical span at residues 506 to 520 (GYLLAYAIAVAFIII). Over 521 to 525 (AELNT) the chain is Extracellular. Residues 526–542 (IAPIISNFFLCSYALIN) form a helical membrane-spanning segment. Position 538 (Y538) interacts with chloride. The Cytoplasmic portion of the chain corresponds to 543-565 (FSCFHASITNSPGWRPSFRYYSK). A run of 2 helical transmembrane segments spans residues 566-585 (WAAL…LTWW) and 586-597 (AALIAIGVVLFL). The Cytoplasmic portion of the chain corresponds to 598-1002 (LLYVIYKKPE…QENVLTFYCQ (405 aa)). The segment at 613–628 (SVQAGSYNLALSYSVG) is scissor helix. The ATP site is built by L646, R653, V675, G739, L778, and N779.

It belongs to the SLC12A transporter family. As to quaternary structure, homodimer; adopts a domain-swap conformation at the scissor helices connecting the transmembrane domain and C-terminal domain. Interacts with KLHL3. Interacts with IL18R1; this interaction is increased by IL18 treatment. In terms of processing, ubiquitinated; ubiquitination is essential for regulation of endocytosis. Post-translationally, phosphorylated at Thr-53, Thr-58 and Ser-71 by OXSR1/OSR1 and STK39/SPAK downstream of WNK4, promoting its activity. Phosphorylated in response to IL18. In terms of tissue distribution, expressed predominantly in kidney, including in distal tubules (at protein level). Detected at low levels in heart, lung and liver. Not detected in normal aorta, but abundantly expressed in fatty streaks and advanced atherosclerotic lesions. In atherosclerotic lesions, expressed in macrophages, smooth muscle cells and endothelial cells (at protein level).

The protein resides in the cell membrane. The protein localises to the apical cell membrane. The catalysed reaction is chloride(out) + Na(+)(out) = chloride(in) + Na(+)(in). Phosphorylation by OXSR1/OSR1 and STK39/SPAK in kidney distal convoluted tubules promotes its activity. Also activated by OXSR1/OSR1 and STK39/SPAK downstream of WNK3. Inhibited by thiazide-type diuretic metolazone. Thiazide drugs, such as polythiazide, specifically inhibit SLC12A3/NCC transporter activity by competing with chloride for binding. In terms of biological role, electroneutral sodium and chloride ion cotransporter, which acts as a key mediator of sodium and chloride reabsorption in kidney distal convoluted tubules. Also acts as a receptor for the pro-inflammatory cytokine IL18, thereby contributing to IL18-induced cytokine production, including IFNG, IL6, IL18 and CCL2. May act either independently of IL18R1, or in a complex with IL18R1. The sequence is that of Solute carrier family 12 member 3 from Mus musculus (Mouse).